The chain runs to 267 residues: Eukaryotic translation initiation factor 3 subunit J (267 aa).

The interval 1–70 (MSWNDDDVFA…KDKKSSTDQV (70 aa)) is disordered. Positions 24–38 (WDAEEPIMESWDAEE) are enriched in acidic residues. Residues 39–66 (TPAKKETSPKPDSKKNAKKDSKKDKKSS) are compositionally biased toward basic and acidic residues. A coiled-coil region spans residues 192–220 (IESIRQSIATLNVLMKDKEREERRARLAK).

It belongs to the eIF-3 subunit J family. As to quaternary structure, component of the eukaryotic translation initiation factor 3 (eIF-3) complex.

Its subcellular location is the cytoplasm. Functionally, component of the eukaryotic translation initiation factor 3 (eIF-3) complex, which is involved in protein synthesis of a specialized repertoire of mRNAs and, together with other initiation factors, stimulates binding of mRNA and methionyl-tRNAi to the 40S ribosome. The eIF-3 complex specifically targets and initiates translation of a subset of mRNAs involved in cell proliferation. This Vanderwaltozyma polyspora (strain ATCC 22028 / DSM 70294 / BCRC 21397 / CBS 2163 / NBRC 10782 / NRRL Y-8283 / UCD 57-17) (Kluyveromyces polysporus) protein is Eukaryotic translation initiation factor 3 subunit J.